We begin with the raw amino-acid sequence, 354 residues long: Ferrochelatase (354 aa).

Residues His-214 and Glu-295 each contribute to the Fe cation site.

This sequence belongs to the ferrochelatase family.

It is found in the cytoplasm. It carries out the reaction heme b + 2 H(+) = protoporphyrin IX + Fe(2+). It participates in porphyrin-containing compound metabolism; protoheme biosynthesis; protoheme from protoporphyrin-IX: step 1/1. Functionally, catalyzes the ferrous insertion into protoporphyrin IX. The sequence is that of Ferrochelatase from Burkholderia ambifaria (strain MC40-6).